Consider the following 585-residue polypeptide: Arginine--tRNA ligase (585 aa).

Residues 126 to 136 carry the 'HIGH' region motif; it reads PNIAKEMHVGH.

It belongs to the class-I aminoacyl-tRNA synthetase family. In terms of assembly, monomer.

The protein localises to the cytoplasm. It catalyses the reaction tRNA(Arg) + L-arginine + ATP = L-arginyl-tRNA(Arg) + AMP + diphosphate. This Rippkaea orientalis (strain PCC 8801 / RF-1) (Cyanothece sp. (strain PCC 8801)) protein is Arginine--tRNA ligase.